Here is a 1095-residue protein sequence, read N- to C-terminus: Solute carrier family 12 member 1 (1095 aa).

The Cytoplasmic portion of the chain corresponds to 1–173 (MSVNIPSNSV…EEDVTGVVKF (173 aa)). The RFXV motif signature appears at 16 to 19 (RFQV). The interval 26–45 (HGSGAAMSDSTDPPHYEETS) is disordered. 2 positions are modified to phosphoserine: S57 and S87. A phosphothreonine mark is found at T91, T96, T101, and T114. Position 116 is a phosphoserine (S116). S126 carries the post-translational modification Phosphoserine; by AMPK. At S144 the chain carries Phosphoserine. A helical transmembrane segment spans residues 174–194 (GWVKGVLVRCMLNIWGVMLFI). Topologically, residues 195–197 (RLS) are extracellular. Residues 198–218 (WIVGEAGIGLGVIIIGLSVVV) traverse the membrane as a helical segment. Residues 219–255 (TTLTGISMSAICTNGVVRGGGAYYLISRSLGPEFGGS) lie on the Cytoplasmic side of the membrane. The chain crosses the membrane as a helical span at residues 256–276 (IGLIFRFANAVRVAMYVVGFA). Residues 277 to 298 (ETVVDLLKESDSMMVDPTNDIR) lie on the Extracellular side of the membrane. Residues 299 to 319 (IIGSITVVILLGISVAGMEWE) form a helical membrane-spanning segment. Residues 320–323 (AKAQ) are Cytoplasmic-facing. Residues 324 to 344 (VILLVILLIGIANFFIGTVIP) traverse the membrane as a helical segment. At 345-375 (SNNEKKSRGFFNYQASIFAENFGPSFTEGEG) the chain is on the extracellular side. A helical transmembrane segment spans residues 376–396 (FFSVFAIFFPAATGILAGANI). Topologically, residues 397-413 (SGDLEDPQDAIPRGTML) are cytoplasmic. A helical transmembrane segment spans residues 414 to 434 (AIFITTVAYIGVAICVRACVV). Residues 435-546 (RDATGSMNDT…NNEPLRGYFL (112 aa)) are Extracellular-facing. N-linked (GlcNAc...) asparagine glycosylation is found at N442 and N452. The next 2 membrane-spanning stretches (helical) occupy residues 547–567 (TFVI…APII) and 568–588 (SNFF…ASYA). Residues 589–605 (KSPGWRPAYGIYNMWVS) are Extracellular-facing. Residues 606 to 626 (LFGAILCCAVMFVINWWAAVI) form a helical membrane-spanning segment. At 627–1095 (TYVIELFLYI…NHKNVLTFYS (469 aa)) the chain is on the cytoplasmic side.

The protein belongs to the SLC12A transporter family. In terms of assembly, when phosphorylated, interacts with PPP3CB. Phosphorylated at Ser-87, Thr-96 and Thr-101 by OXSR1/OSR1 and STK39/SPAK downstream of WNK kinases (WNK1, WNK2, WNK3 or WNK4), promoting its activity. Expressed predominantly in kidney (at protein level).

The protein resides in the apical cell membrane. The enzyme catalyses K(+)(out) + 2 chloride(out) + Na(+)(out) = K(+)(in) + 2 chloride(in) + Na(+)(in). Activated following phosphorylation by OXSR1/OSR1 and STK39/SPAK downstream of WNK kinases (WNK1, WNK2, WNK3 or WNK4). Renal sodium, potassium and chloride ion cotransporter that mediates the transepithelial NaCl reabsorption in the thick ascending limb and plays an essential role in the urinary concentration and volume regulation. Electrically silent transporter system. This Rattus norvegicus (Rat) protein is Solute carrier family 12 member 1 (Slc12a1).